A 406-amino-acid chain; its full sequence is Phosphopentomutase (406 aa).

6 residues coordinate Mn(2+): Asp-10, Asp-305, His-310, Asp-346, His-347, and His-358.

The protein belongs to the phosphopentomutase family. It depends on Mn(2+) as a cofactor.

The protein resides in the cytoplasm. It catalyses the reaction 2-deoxy-alpha-D-ribose 1-phosphate = 2-deoxy-D-ribose 5-phosphate. It carries out the reaction alpha-D-ribose 1-phosphate = D-ribose 5-phosphate. It functions in the pathway carbohydrate degradation; 2-deoxy-D-ribose 1-phosphate degradation; D-glyceraldehyde 3-phosphate and acetaldehyde from 2-deoxy-alpha-D-ribose 1-phosphate: step 1/2. Functionally, isomerase that catalyzes the conversion of deoxy-ribose 1-phosphate (dRib-1-P) and ribose 1-phosphate (Rib-1-P) to deoxy-ribose 5-phosphate (dRib-5-P) and ribose 5-phosphate (Rib-5-P), respectively. In Photobacterium profundum (strain SS9), this protein is Phosphopentomutase.